The primary structure comprises 197 residues: NADH-quinone oxidoreductase subunit C (197 aa).

Belongs to the complex I 30 kDa subunit family. In terms of assembly, NDH-1 is composed of 14 different subunits. Subunits NuoB, C, D, E, F, and G constitute the peripheral sector of the complex.

It localises to the cell inner membrane. It catalyses the reaction a quinone + NADH + 5 H(+)(in) = a quinol + NAD(+) + 4 H(+)(out). Functionally, NDH-1 shuttles electrons from NADH, via FMN and iron-sulfur (Fe-S) centers, to quinones in the respiratory chain. The immediate electron acceptor for the enzyme in this species is believed to be ubiquinone. Couples the redox reaction to proton translocation (for every two electrons transferred, four hydrogen ions are translocated across the cytoplasmic membrane), and thus conserves the redox energy in a proton gradient. The polypeptide is NADH-quinone oxidoreductase subunit C (Neisseria meningitidis serogroup A / serotype 4A (strain DSM 15465 / Z2491)).